Consider the following 532-residue polypeptide: Zinc finger protein ZIC 2 (532 aa).

The tract at residues 100–255 is necessary for interaction with MDFIC and transcriptional activation or repression; sequence PHAAHVGSYS…YMRQQCIKQE (156 aa). Phosphoserine is present on residues Ser-191 and Ser-199. A Glycyl lysine isopeptide (Lys-Gly) (interchain with G-Cter in SUMO2) cross-link involves residue Lys-253. The segment at 256–291 adopts a C2H2-type 1; atypical zinc-finger fold; that stretch reads LICKWIDPEQLSNPKKSCNKTFSTMHELVTHVSVEH. Residues 300-327 form a C2H2-type 2; atypical zinc finger; it reads HVCFWEECPREGKPFKAKYKLVNHIRVH. 3 C2H2-type zinc fingers span residues 333-357, 363-387, and 393-415; these read FPCPFPGCGKVFARSENLKIHKRTH, FQCEFEGCDRRFANSSDRKKHMHVH, and YLCKMCDKSYTHPSSLRKHMKVH. Disordered stretches follow at residues 406-452 and 475-532; these read SSLR…SSSN and HRGG…EWYV. A compositionally biased stretch (low complexity) spans 417-435; it reads SSPQGSESSPAASSGYESS. Positions 476-521 are enriched in gly residues; that stretch reads RGGGSGSGGAGGGSGGGSGSGGGGGGAGGGGGGSSGGGSGTAGGHS. Residues 523–532 show a composition bias toward polar residues; that stretch reads LSSNFNEWYV.

Belongs to the GLI C2H2-type zinc-finger protein family. In terms of assembly, interacts with RNF180. Interacts (via the C2H2-type domains 3, 4 and 5) with MDFIC (via the C2H2-type domains 3, 4 and 5); the interaction reduces its transcriptional activity. Interacts with GLI1 and GLI2. Interacts (via C2H2-type domain 3) with DHX9. Phosphorylated. In terms of processing, ubiquitinated by RNF180, leading to its degradation.

The protein resides in the nucleus. It is found in the cytoplasm. Acts as a transcriptional activator or repressor. Plays important roles in the early stage of organogenesis of the CNS. Activates the transcription of the serotonin transporter SERT in uncrossed ipsilateral retinal ganglion cells (iRGCs) to refine eye-specific projections in primary visual targets. Its transcriptional activity is repressed by MDFIC. Involved in the formation of the ipsilateral retinal projection at the optic chiasm midline. Drives the expression of EPHB1 on ipsilaterally projecting growth cones. Binds to the minimal GLI-consensus sequence 5'-TGGGTGGTC-3'. Associates to the basal SERT promoter region from ventrotemporal retinal segments of retinal embryos. In Homo sapiens (Human), this protein is Zinc finger protein ZIC 2 (ZIC2).